The chain runs to 77 residues: MMSKLGVLLTICLLLFPLFALPQDGDQPADRPAERMQDDISSEQNSLLEKRVTDRCCKGKRECGRWCRDHSRCCGRR.

The signal sequence occupies residues 1–22 (MMSKLGVLLTICLLLFPLFALP). Residues 23-51 (QDGDQPADRPAERMQDDISSEQNSLLEKR) constitute a propeptide that is removed on maturation. The segment at 26-46 (DQPADRPAERMQDDISSEQNS) is disordered. Residues 28–38 (PADRPAERMQD) show a composition bias toward basic and acidic residues. Intrachain disulfides connect C56-C67, C57-C73, and C63-C74. C74 carries the cysteine amide modification.

This sequence belongs to the conotoxin M superfamily. As to expression, expressed by the venom duct.

It is found in the secreted. In terms of biological role, mu-conotoxins block voltage-gated sodium channels (Nav). This synthetic toxin potently blocks rNav1.2/SCN2A, and rNav1.4/SCN4A. It also moderately blocks rNav1.1/SCN1A, rNav1.3/SCN3A, rNav1.5/SCN5A, and mNav1.6/SCN8A. The inhibition is reversible. The protein is Mu-conotoxin BuIIIA of Conus bullatus (Bubble cone).